A 164-amino-acid polypeptide reads, in one-letter code: Magnesium-dependent phosphatase 1 (164 aa).

Asp11 acts as the Nucleophile in catalysis. Residue Asp11 participates in Mg(2+) binding. Leu12 and Asp13 together coordinate phosphate. Asp13 contacts Mg(2+). Asp13 serves as the catalytic Proton donor. Trp20 serves as a coordination point for substrate. Phosphate-binding residues include Ser69, Arg70, and Lys100. Arg70 provides a ligand contact to substrate. Asp123 is a Mg(2+) binding site.

Belongs to the HAD-like hydrolase superfamily. Requires Mg(2+) as cofactor.

The enzyme catalyses O-phospho-L-tyrosyl-[protein] + H2O = L-tyrosyl-[protein] + phosphate. With respect to regulation, inhibited by vanadate and zinc, and slightly by calcium. Its function is as follows. Magnesium-dependent phosphatase which may act as a tyrosine phosphatase. This Mus musculus (Mouse) protein is Magnesium-dependent phosphatase 1 (Mdp1).